The following is a 284-amino-acid chain: Formamidopyrimidine-DNA glycosylase (284 aa).

Pro-2 functions as the Schiff-base intermediate with DNA in the catalytic mechanism. The active-site Proton donor is Glu-3. Residue Lys-61 is the Proton donor; for beta-elimination activity of the active site. Residues His-95, Arg-114, and Arg-159 each coordinate DNA. The segment at 244-278 adopts an FPG-type zinc-finger fold; it reads WVYGRKGQPCRVCNTPIERIRLAGRSTHFCPTCQR. Arg-268 (proton donor; for delta-elimination activity) is an active-site residue.

This sequence belongs to the FPG family. As to quaternary structure, monomer. Zn(2+) is required as a cofactor.

The enzyme catalyses Hydrolysis of DNA containing ring-opened 7-methylguanine residues, releasing 2,6-diamino-4-hydroxy-5-(N-methyl)formamidopyrimidine.. It carries out the reaction 2'-deoxyribonucleotide-(2'-deoxyribose 5'-phosphate)-2'-deoxyribonucleotide-DNA = a 3'-end 2'-deoxyribonucleotide-(2,3-dehydro-2,3-deoxyribose 5'-phosphate)-DNA + a 5'-end 5'-phospho-2'-deoxyribonucleoside-DNA + H(+). Its function is as follows. Involved in base excision repair of DNA damaged by oxidation or by mutagenic agents. Acts as a DNA glycosylase that recognizes and removes damaged bases. Has a preference for oxidized purines, such as 7,8-dihydro-8-oxoguanine (8-oxoG). Has AP (apurinic/apyrimidinic) lyase activity and introduces nicks in the DNA strand. Cleaves the DNA backbone by beta-delta elimination to generate a single-strand break at the site of the removed base with both 3'- and 5'-phosphates. In Gloeobacter violaceus (strain ATCC 29082 / PCC 7421), this protein is Formamidopyrimidine-DNA glycosylase.